A 344-amino-acid polypeptide reads, in one-letter code: Phosphoribosylformylglycinamidine cyclo-ligase (344 aa).

Belongs to the AIR synthase family.

It is found in the cytoplasm. The catalysed reaction is 2-formamido-N(1)-(5-O-phospho-beta-D-ribosyl)acetamidine + ATP = 5-amino-1-(5-phospho-beta-D-ribosyl)imidazole + ADP + phosphate + H(+). The protein operates within purine metabolism; IMP biosynthesis via de novo pathway; 5-amino-1-(5-phospho-D-ribosyl)imidazole from N(2)-formyl-N(1)-(5-phospho-D-ribosyl)glycinamide: step 2/2. The chain is Phosphoribosylformylglycinamidine cyclo-ligase from Synechococcus sp. (strain RCC307).